A 291-amino-acid polypeptide reads, in one-letter code: ATP synthase gamma chain (291 aa).

The protein belongs to the ATPase gamma chain family. In terms of assembly, F-type ATPases have 2 components, CF(1) - the catalytic core - and CF(0) - the membrane proton channel. CF(1) has five subunits: alpha(3), beta(3), gamma(1), delta(1), epsilon(1). CF(0) has three main subunits: a, b and c.

The protein resides in the cell membrane. Functionally, produces ATP from ADP in the presence of a proton gradient across the membrane. The gamma chain is believed to be important in regulating ATPase activity and the flow of protons through the CF(0) complex. The protein is ATP synthase gamma chain of Streptococcus pyogenes serotype M49 (strain NZ131).